We begin with the raw amino-acid sequence, 222 residues long: Small ribosomal subunit protein uS3 (222 aa).

Residues 39–107 (VREFLHKKLA…PVQINIEEVR (69 aa)) enclose the KH type-2 domain.

Belongs to the universal ribosomal protein uS3 family. In terms of assembly, part of the 30S ribosomal subunit. Forms a tight complex with proteins S10 and S14.

In terms of biological role, binds the lower part of the 30S subunit head. Binds mRNA in the 70S ribosome, positioning it for translation. This is Small ribosomal subunit protein uS3 from Francisella tularensis subsp. tularensis (strain FSC 198).